The primary structure comprises 250 residues: Small ribosomal subunit protein uS3 (250 aa).

Residues 39-107 (VREFLTKNLK…PAQVSINEID (69 aa)) enclose the KH type-2 domain. The disordered stretch occupies residues 215-250 (MNPAPAEERPAKRGRGRGEGQERRGRRGDRAADKGE). Positions 220–250 (AEERPAKRGRGRGEGQERRGRRGDRAADKGE) are enriched in basic and acidic residues.

Belongs to the universal ribosomal protein uS3 family. In terms of assembly, part of the 30S ribosomal subunit. Forms a tight complex with proteins S10 and S14.

In terms of biological role, binds the lower part of the 30S subunit head. Binds mRNA in the 70S ribosome, positioning it for translation. This is Small ribosomal subunit protein uS3 from Acinetobacter baumannii (strain AB0057).